Here is a 331-residue protein sequence, read N- to C-terminus: MIDIDGSYGEGGGQIVRNAIALSAVTGKATSIKNIRKDRPNPGLSAQHVKAIGIAALLCDAKVEGIKIGSTNIAFFPQEIRGGKYTIDIGTAGSIALLLQCIMPIATYSNTNIKLEIKGGTDVSWAPSIDYLKNVTLSALSKMGYRCNIDILKRGYYPRGGGIVNAIIEPSHLVPDRFSEERGTIRGISHCSNLPEHVAQRQADKAKAILENAGHECSIETCRTDFTSTGSGITLYCGMKGSFVPGKRGTTAEKVGNDAATSLLDELLTPSSVDIHLADQLIPYLGLAEGGSFTVKEISPHTKTNIWVTEKFLDVKFKIEKRNDIVKISIQ.

Residues Q100 and 276–280 contribute to the ATP site; that span reads HLADQ. Catalysis depends on H301, which acts as the Tele-AMP-histidine intermediate.

Belongs to the RNA 3'-terminal cyclase family. Type 1 subfamily.

The protein resides in the cytoplasm. It carries out the reaction a 3'-end 3'-phospho-ribonucleotide-RNA + ATP = a 3'-end 2',3'-cyclophospho-ribonucleotide-RNA + AMP + diphosphate. In terms of biological role, catalyzes the conversion of 3'-phosphate to a 2',3'-cyclic phosphodiester at the end of RNA. The mechanism of action of the enzyme occurs in 3 steps: (A) adenylation of the enzyme by ATP; (B) transfer of adenylate to an RNA-N3'P to produce RNA-N3'PP5'A; (C) and attack of the adjacent 2'-hydroxyl on the 3'-phosphorus in the diester linkage to produce the cyclic end product. The biological role of this enzyme is unknown but it is likely to function in some aspects of cellular RNA processing. This Methanococcoides burtonii (strain DSM 6242 / NBRC 107633 / OCM 468 / ACE-M) protein is RNA 3'-terminal phosphate cyclase.